Reading from the N-terminus, the 117-residue chain is Venom protein TxLP11 (117 aa).

Positions 1–22 (MNTKTLIVVFLVCLLVSEVVLA) are cleaved as a signal peptide.

Contains 4 disulfide bonds. In terms of tissue distribution, expressed by the venom gland.

It is found in the secreted. In Lychas mucronatus (Chinese swimming scorpion), this protein is Venom protein TxLP11.